We begin with the raw amino-acid sequence, 273 residues long: Formamidopyrimidine-DNA glycosylase (273 aa).

Pro2 serves as the catalytic Schiff-base intermediate with DNA. Glu3 serves as the catalytic Proton donor. The Proton donor; for beta-elimination activity role is filled by Lys58. Positions 92, 111, and 153 each coordinate DNA. The segment at 238–272 (KVYGREGQSCLSCSSTIIKIKHSGRSTFYCKTCQY) adopts an FPG-type zinc-finger fold. The Proton donor; for delta-elimination activity role is filled by Arg262.

The protein belongs to the FPG family. Monomer. Zn(2+) serves as cofactor.

It carries out the reaction Hydrolysis of DNA containing ring-opened 7-methylguanine residues, releasing 2,6-diamino-4-hydroxy-5-(N-methyl)formamidopyrimidine.. It catalyses the reaction 2'-deoxyribonucleotide-(2'-deoxyribose 5'-phosphate)-2'-deoxyribonucleotide-DNA = a 3'-end 2'-deoxyribonucleotide-(2,3-dehydro-2,3-deoxyribose 5'-phosphate)-DNA + a 5'-end 5'-phospho-2'-deoxyribonucleoside-DNA + H(+). Involved in base excision repair of DNA damaged by oxidation or by mutagenic agents. Acts as a DNA glycosylase that recognizes and removes damaged bases. Has a preference for oxidized purines, such as 7,8-dihydro-8-oxoguanine (8-oxoG). Has AP (apurinic/apyrimidinic) lyase activity and introduces nicks in the DNA strand. Cleaves the DNA backbone by beta-delta elimination to generate a single-strand break at the site of the removed base with both 3'- and 5'-phosphates. This chain is Formamidopyrimidine-DNA glycosylase, found in Rickettsia conorii (strain ATCC VR-613 / Malish 7).